The primary structure comprises 545 residues: CTP synthase (545 aa).

An amidoligase domain region spans residues 1-266; that stretch reads MTTNYIFVTG…DDYICKRFSL (266 aa). A CTP-binding site is contributed by Ser-14. Residue Ser-14 participates in UTP binding. Residues 15-20 and Asp-72 contribute to the ATP site; that span reads SLGKGI. 2 residues coordinate Mg(2+): Asp-72 and Glu-140. Residues 147–149, 187–192, and Lys-223 contribute to the CTP site; these read DIE and KTKPTQ. UTP-binding positions include 187-192 and Lys-223; that span reads KTKPTQ. Position 239 to 241 (239 to 241) interacts with ATP; that stretch reads KDV. Positions 291–542 constitute a Glutamine amidotransferase type-1 domain; that stretch reads TIGMIGKYVE…VKAAGEYQKR (252 aa). Gly-352 lines the L-glutamine pocket. Cys-379 serves as the catalytic Nucleophile; for glutamine hydrolysis. L-glutamine is bound by residues 380–383, Glu-403, and Arg-470; that span reads LGMQ. Active-site residues include His-515 and Glu-517.

The protein belongs to the CTP synthase family. As to quaternary structure, homotetramer.

The enzyme catalyses UTP + L-glutamine + ATP + H2O = CTP + L-glutamate + ADP + phosphate + 2 H(+). It carries out the reaction L-glutamine + H2O = L-glutamate + NH4(+). It catalyses the reaction UTP + NH4(+) + ATP = CTP + ADP + phosphate + 2 H(+). It functions in the pathway pyrimidine metabolism; CTP biosynthesis via de novo pathway; CTP from UDP: step 2/2. With respect to regulation, allosterically activated by GTP, when glutamine is the substrate; GTP has no effect on the reaction when ammonia is the substrate. The allosteric effector GTP functions by stabilizing the protein conformation that binds the tetrahedral intermediate(s) formed during glutamine hydrolysis. Inhibited by the product CTP, via allosteric rather than competitive inhibition. Catalyzes the ATP-dependent amination of UTP to CTP with either L-glutamine or ammonia as the source of nitrogen. Regulates intracellular CTP levels through interactions with the four ribonucleotide triphosphates. In Yersinia enterocolitica serotype O:8 / biotype 1B (strain NCTC 13174 / 8081), this protein is CTP synthase.